A 260-amino-acid polypeptide reads, in one-letter code: Global transcriptional regulator CodY (260 aa).

Residues Met-1–Leu-159 form a GAF domain region. Residues Ala-207–Arg-226 constitute a DNA-binding region (H-T-H motif).

Belongs to the CodY family.

It is found in the cytoplasm. In terms of biological role, DNA-binding global transcriptional regulator which is involved in the adaptive response to starvation and acts by directly or indirectly controlling the expression of numerous genes in response to nutrient availability. During rapid exponential growth, CodY is highly active and represses genes whose products allow adaptation to nutrient depletion. The sequence is that of Global transcriptional regulator CodY from Streptococcus equi subsp. zooepidemicus (strain H70).